The following is a 489-amino-acid chain: MAVMGIQMVVTLLVASLMQRVSPHYSFGRWLLCNGSLFRYKHPTEEELRTLAGKQKPKAKKERRTNGVAEEKPLTVPKDIDLRLDTQPINTMDALVLRYFLEYQWFIDFALYSTIIYLFTEAYYCVVDAQNEINIGVLWCLMSIIFSIKVLFTVMKHYFRSEEGGERSVCMTFAFFFLLIAMIVTIVRDEYLEFGLEPGLASVCHNLENFLAQQGWQWSMPFVKLAFKIALVALCAFLGGCLTFPGLRLAQTHLDALKMAADRPMLQLLLHMSFLPPVIVVVLWIRPITRDFLLNAPMGKESVELMSNSAYNTFRLWIIVLLCLLRFCLTRFHLQAYLCLADRWVEQMKREAGRISMLEIQRKISRIFCYLTVVALQYLAPVILTFHCVFMLKSLGDYSWGLYPEPPGFSPVVDSSPVQSHSPTSEEEEDTEDVQAAVEQIMGVLTSLRGLFTPLFFRGIFSFLTWWVSVCQIITSLFGLYFHQYLGAS.

The first 23 residues, 1–23 (MAVMGIQMVVTLLVASLMQRVSP), serve as a signal peptide directing secretion. Topologically, residues 24-98 (HYSFGRWLLC…INTMDALVLR (75 aa)) are extracellular. N-linked (GlcNAc...) asparagine glycosylation occurs at asparagine 34. The chain crosses the membrane as a helical span at residues 99 to 119 (YFLEYQWFIDFALYSTIIYLF). Topologically, residues 120–134 (TEAYYCVVDAQNEIN) are cytoplasmic. The chain crosses the membrane as a helical span at residues 135-155 (IGVLWCLMSIIFSIKVLFTVM). At 156-166 (KHYFRSEEGGE) the chain is on the extracellular side. The helical transmembrane segment at 167–187 (RSVCMTFAFFFLLIAMIVTIV) threads the bilayer. At 188–224 (RDEYLEFGLEPGLASVCHNLENFLAQQGWQWSMPFVK) the chain is on the cytoplasmic side. A helical transmembrane segment spans residues 225-245 (LAFKIALVALCAFLGGCLTFP). Residues 246-264 (GLRLAQTHLDALKMAADRP) lie on the Extracellular side of the membrane. Residues 265–285 (MLQLLLHMSFLPPVIVVVLWI) form a helical membrane-spanning segment. Over 286–304 (RPITRDFLLNAPMGKESVE) the chain is Cytoplasmic. The helical transmembrane segment at 305–325 (LMSNSAYNTFRLWIIVLLCLL) threads the bilayer. Over 326 to 370 (RFCLTRFHLQAYLCLADRWVEQMKREAGRISMLEIQRKISRIFCY) the chain is Extracellular. Residues 371–391 (LTVVALQYLAPVILTFHCVFM) form a helical membrane-spanning segment. Residues 392-459 (LKSLGDYSWG…GLFTPLFFRG (68 aa)) are Cytoplasmic-facing. Positions 413–432 (VDSSPVQSHSPTSEEEEDTE) are disordered. A helical transmembrane segment spans residues 460–480 (IFSFLTWWVSVCQIITSLFGL). Topologically, residues 481–489 (YFHQYLGAS) are extracellular.

Belongs to the TMEM161 family.

The protein resides in the membrane. In terms of biological role, may play a role in protection against oxidative stress. This is Transmembrane protein 161A (tmem161a) from Xenopus laevis (African clawed frog).